Reading from the N-terminus, the 87-residue chain is UPF0250 protein Spro_1197 (87 aa).

This sequence belongs to the UPF0250 family.

The sequence is that of UPF0250 protein Spro_1197 from Serratia proteamaculans (strain 568).